Here is a 236-residue protein sequence, read N- to C-terminus: 2-C-methyl-D-erythritol 4-phosphate cytidylyltransferase (236 aa).

Belongs to the IspD/TarI cytidylyltransferase family. IspD subfamily. In terms of assembly, homodimer.

It carries out the reaction 2-C-methyl-D-erythritol 4-phosphate + CTP + H(+) = 4-CDP-2-C-methyl-D-erythritol + diphosphate. The protein operates within isoprenoid biosynthesis; isopentenyl diphosphate biosynthesis via DXP pathway; isopentenyl diphosphate from 1-deoxy-D-xylulose 5-phosphate: step 2/6. Catalyzes the formation of 4-diphosphocytidyl-2-C-methyl-D-erythritol from CTP and 2-C-methyl-D-erythritol 4-phosphate (MEP). The sequence is that of 2-C-methyl-D-erythritol 4-phosphate cytidylyltransferase from Klebsiella pneumoniae subsp. pneumoniae (strain ATCC 700721 / MGH 78578).